Reading from the N-terminus, the 352-residue chain is Heat-inducible transcription repressor HrcA (352 aa).

This sequence belongs to the HrcA family.

Functionally, negative regulator of class I heat shock genes (grpE-dnaK-dnaJ and groELS operons). Prevents heat-shock induction of these operons. This chain is Heat-inducible transcription repressor HrcA, found in Prochlorococcus marinus (strain MIT 9313).